We begin with the raw amino-acid sequence, 38 residues long: Photosystem II reaction center protein L (38 aa).

A helical membrane pass occupies residues 17-37; that stretch reads SLYWGLLLIFVLAILFSSYIF.

Belongs to the PsbL family. As to quaternary structure, PSII is composed of 1 copy each of membrane proteins PsbA, PsbB, PsbC, PsbD, PsbE, PsbF, PsbH, PsbI, PsbJ, PsbK, PsbL, PsbM, PsbT, PsbX, PsbY, PsbZ, Psb30/Ycf12, at least 3 peripheral proteins of the oxygen-evolving complex and a large number of cofactors. It forms dimeric complexes.

It is found in the plastid. Its subcellular location is the chloroplast thylakoid membrane. In terms of biological role, one of the components of the core complex of photosystem II (PSII). PSII is a light-driven water:plastoquinone oxidoreductase that uses light energy to abstract electrons from H(2)O, generating O(2) and a proton gradient subsequently used for ATP formation. It consists of a core antenna complex that captures photons, and an electron transfer chain that converts photonic excitation into a charge separation. This subunit is found at the monomer-monomer interface and is required for correct PSII assembly and/or dimerization. In Mesostigma viride (Green alga), this protein is Photosystem II reaction center protein L.